Reading from the N-terminus, the 69-residue chain is uncharacterized protein (69 aa).

The first 21 residues, 1–21 (MELLIPLSLLGLYLFSGTRDS), serve as a signal peptide directing secretion. Asparagine 41 is a glycosylation site (N-linked (GlcNAc...) asparagine).

The protein resides in the secreted. This is an uncharacterized protein from Dictyostelium discoideum (Social amoeba).